We begin with the raw amino-acid sequence, 166 residues long: MSEAIIAKKAEQVELIAEKMKAAASIVVVDSRGLTVDQDTVLRRSLRESGVEFKVIKNSILTRAAEKAGLDELKDVFVGPSAVAFSNEDVIAPAKVINDFTKTADALEIKGGAIEGAVSSKEEIQALATLPNREGMLSMLLSVLQAPVRNVAYAVKAVAENKEGAA.

It belongs to the universal ribosomal protein uL10 family. In terms of assembly, part of the ribosomal stalk of the 50S ribosomal subunit. The N-terminus interacts with L11 and the large rRNA to form the base of the stalk. The C-terminus forms an elongated spine to which L12 dimers bind in a sequential fashion forming a multimeric L10(L12)X complex.

Forms part of the ribosomal stalk, playing a central role in the interaction of the ribosome with GTP-bound translation factors. The chain is Large ribosomal subunit protein uL10 from Streptococcus pyogenes serotype M28 (strain MGAS6180).